Here is a 375-residue protein sequence, read N- to C-terminus: Phospho-N-acetylmuramoyl-pentapeptide-transferase (375 aa).

Transmembrane regions (helical) follow at residues 2-22 (IGLL…TPLF), 55-75 (AVII…LAVL), 82-102 (PTAS…VGFV), 120-140 (GKII…LNFP), 158-178 (IPWL…FVIW), 198-218 (GLAT…SLFQ), 237-257 (PMDL…FLWW), 264-284 (IFMG…FAIF), 289-309 (ILVA…IIQV), and 345-365 (WLLS…DWLI).

It belongs to the glycosyltransferase 4 family. MraY subfamily. Requires Mg(2+) as cofactor.

It is found in the cell membrane. The catalysed reaction is UDP-N-acetyl-alpha-D-muramoyl-L-alanyl-gamma-D-glutamyl-meso-2,6-diaminopimeloyl-D-alanyl-D-alanine + di-trans,octa-cis-undecaprenyl phosphate = di-trans,octa-cis-undecaprenyl diphospho-N-acetyl-alpha-D-muramoyl-L-alanyl-D-glutamyl-meso-2,6-diaminopimeloyl-D-alanyl-D-alanine + UMP. It participates in cell wall biogenesis; peptidoglycan biosynthesis. Its function is as follows. Catalyzes the initial step of the lipid cycle reactions in the biosynthesis of the cell wall peptidoglycan: transfers peptidoglycan precursor phospho-MurNAc-pentapeptide from UDP-MurNAc-pentapeptide onto the lipid carrier undecaprenyl phosphate, yielding undecaprenyl-pyrophosphoryl-MurNAc-pentapeptide, known as lipid I. The sequence is that of Phospho-N-acetylmuramoyl-pentapeptide-transferase from Micrococcus luteus (strain ATCC 4698 / DSM 20030 / JCM 1464 / CCM 169 / CCUG 5858 / IAM 1056 / NBRC 3333 / NCIMB 9278 / NCTC 2665 / VKM Ac-2230) (Micrococcus lysodeikticus).